We begin with the raw amino-acid sequence, 88 residues long: C-C motif chemokine 18 (88 aa).

Positions Met-1–Cys-19 are cleaved as a signal peptide. Disulfide bonds link Cys-29/Cys-53 and Cys-30/Cys-69.

The protein belongs to the intercrine beta (chemokine CC) family. Post-translationally, the Cys-29/Cys-53 disulfide bond is required for activity.

It localises to the secreted. Functionally, chemotactic factor that attracts lymphocytes but not monocytes or granulocytes. May be involved in B-cell migration into B-cell follicles in lymph nodes. Attracts naive T-lymphocytes toward dendritic cells and activated macrophages in lymph nodes, has chemotactic activity for naive T-cells, CD4+ and CD8+ T-cells and thus may play a role in both humoral and cell-mediated immunity responses. In Macaca mulatta (Rhesus macaque), this protein is C-C motif chemokine 18 (CCL18).